The primary structure comprises 347 residues: Phosphate acyltransferase (347 aa).

It belongs to the PlsX family. Homodimer. Probably interacts with PlsY.

The protein resides in the cytoplasm. It carries out the reaction a fatty acyl-[ACP] + phosphate = an acyl phosphate + holo-[ACP]. The protein operates within lipid metabolism; phospholipid metabolism. Functionally, catalyzes the reversible formation of acyl-phosphate (acyl-PO(4)) from acyl-[acyl-carrier-protein] (acyl-ACP). This enzyme utilizes acyl-ACP as fatty acyl donor, but not acyl-CoA. The polypeptide is Phosphate acyltransferase (Methylobacillus flagellatus (strain ATCC 51484 / DSM 6875 / VKM B-1610 / KT)).